Here is a 210-residue protein sequence, read N- to C-terminus: Leucyl/phenylalanyl-tRNA--protein transferase (210 aa).

This sequence belongs to the L/F-transferase family.

Its subcellular location is the cytoplasm. It catalyses the reaction N-terminal L-lysyl-[protein] + L-leucyl-tRNA(Leu) = N-terminal L-leucyl-L-lysyl-[protein] + tRNA(Leu) + H(+). The catalysed reaction is N-terminal L-arginyl-[protein] + L-leucyl-tRNA(Leu) = N-terminal L-leucyl-L-arginyl-[protein] + tRNA(Leu) + H(+). It carries out the reaction L-phenylalanyl-tRNA(Phe) + an N-terminal L-alpha-aminoacyl-[protein] = an N-terminal L-phenylalanyl-L-alpha-aminoacyl-[protein] + tRNA(Phe). In terms of biological role, functions in the N-end rule pathway of protein degradation where it conjugates Leu, Phe and, less efficiently, Met from aminoacyl-tRNAs to the N-termini of proteins containing an N-terminal arginine or lysine. This Ruegeria pomeroyi (strain ATCC 700808 / DSM 15171 / DSS-3) (Silicibacter pomeroyi) protein is Leucyl/phenylalanyl-tRNA--protein transferase.